The following is a 343-amino-acid chain: Uroporphyrinogen decarboxylase (343 aa).

Substrate is bound by residues 21 to 25 (RQAGR), aspartate 71, tyrosine 148, serine 203, and histidine 316.

This sequence belongs to the uroporphyrinogen decarboxylase family. In terms of assembly, homodimer.

It localises to the cytoplasm. It carries out the reaction uroporphyrinogen III + 4 H(+) = coproporphyrinogen III + 4 CO2. It functions in the pathway porphyrin-containing compound metabolism; protoporphyrin-IX biosynthesis; coproporphyrinogen-III from 5-aminolevulinate: step 4/4. Its function is as follows. Catalyzes the decarboxylation of four acetate groups of uroporphyrinogen-III to yield coproporphyrinogen-III. The chain is Uroporphyrinogen decarboxylase from Campylobacter fetus subsp. fetus (strain 82-40).